The primary structure comprises 343 residues: MEKNKALDAALAQIERAFGKGSIMRMGSRSESEAIDVISTGSLGLDLALGIGGLPRGRVIEIYGPESSGKTTLALHAVAEAQKRGGTCAFVDAEHALDPIYARKLGVDVDNLLISQPDTGEQALEIADTLVRSGAIDVLVVDSVAALVPRAELEGEMGDSHVGLHARLMSQALRKLTGSISRSKTLVIFLNQIRLKIGVMFGNPETTTGGNALKFYASIRMDIRRIGSIKDREEVTGNQTRVKVVKNKLAPPFRQVEFDIMYGEGISKVGELLDLGVKAGIVEKSGAWFSCDSQRIGQGRENAKQFLRDNPDVAASIEQRIRAQANLVEAAMITDETETEAAD.

Residue 64–71 (GPESSGKT) participates in ATP binding.

Belongs to the RecA family.

Its subcellular location is the cytoplasm. Its function is as follows. Can catalyze the hydrolysis of ATP in the presence of single-stranded DNA, the ATP-dependent uptake of single-stranded DNA by duplex DNA, and the ATP-dependent hybridization of homologous single-stranded DNAs. It interacts with LexA causing its activation and leading to its autocatalytic cleavage. The protein is Protein RecA of Acidiphilium cryptum (strain JF-5).